The chain runs to 313 residues: Homoserine O-succinyltransferase (313 aa).

Cys142 serves as the catalytic Acyl-thioester intermediate. Residues Lys163 and Ser192 each contribute to the substrate site. His235 (proton acceptor) is an active-site residue. Residue Glu237 is part of the active site. Arg249 contacts substrate.

The protein belongs to the MetA family.

Its subcellular location is the cytoplasm. It catalyses the reaction L-homoserine + succinyl-CoA = O-succinyl-L-homoserine + CoA. The protein operates within amino-acid biosynthesis; L-methionine biosynthesis via de novo pathway; O-succinyl-L-homoserine from L-homoserine: step 1/1. In terms of biological role, transfers a succinyl group from succinyl-CoA to L-homoserine, forming succinyl-L-homoserine. The chain is Homoserine O-succinyltransferase from Shewanella baltica (strain OS223).